A 267-amino-acid chain; its full sequence is Eukaryotic translation initiation factor 3 subunit J (267 aa).

Residues 1 to 70 (MSWNDDDVFA…KDKKSSTDQV (70 aa)) are disordered. Residues 24–38 (WDAEEPIMESWDAEE) are compositionally biased toward acidic residues. Basic and acidic residues predominate over residues 39–66 (TPAKKETSPKPDSKKNAKKDSKKDKKSS). Positions 192-220 (IESIRQSIATLNVLMKDKEREERRARLAK) form a coiled coil.

The protein belongs to the eIF-3 subunit J family. In terms of assembly, component of the eukaryotic translation initiation factor 3 (eIF-3) complex.

It is found in the cytoplasm. Functionally, component of the eukaryotic translation initiation factor 3 (eIF-3) complex, which is involved in protein synthesis of a specialized repertoire of mRNAs and, together with other initiation factors, stimulates binding of mRNA and methionyl-tRNAi to the 40S ribosome. The eIF-3 complex specifically targets and initiates translation of a subset of mRNAs involved in cell proliferation. The chain is Eukaryotic translation initiation factor 3 subunit J from Vanderwaltozyma polyspora (strain ATCC 22028 / DSM 70294 / BCRC 21397 / CBS 2163 / NBRC 10782 / NRRL Y-8283 / UCD 57-17) (Kluyveromyces polysporus).